The following is a 283-amino-acid chain: Pantothenate synthetase (283 aa).

30–37 (MGNLHDGH) contributes to the ATP binding site. The active-site Proton donor is H37. (R)-pantoate is bound at residue Q61. Q61 serves as a coordination point for beta-alanine. 149-152 (GEKD) contributes to the ATP binding site. Residue Q155 participates in (R)-pantoate binding. 186–189 (LSSR) contacts ATP.

Belongs to the pantothenate synthetase family. As to quaternary structure, homodimer.

It is found in the cytoplasm. The catalysed reaction is (R)-pantoate + beta-alanine + ATP = (R)-pantothenate + AMP + diphosphate + H(+). It participates in cofactor biosynthesis; (R)-pantothenate biosynthesis; (R)-pantothenate from (R)-pantoate and beta-alanine: step 1/1. In terms of biological role, catalyzes the condensation of pantoate with beta-alanine in an ATP-dependent reaction via a pantoyl-adenylate intermediate. The sequence is that of Pantothenate synthetase from Escherichia fergusonii (strain ATCC 35469 / DSM 13698 / CCUG 18766 / IAM 14443 / JCM 21226 / LMG 7866 / NBRC 102419 / NCTC 12128 / CDC 0568-73).